Here is a 323-residue protein sequence, read N- to C-terminus: V-type ATP synthase subunit C (323 aa).

This sequence belongs to the V-ATPase V0D/AC39 subunit family.

Its function is as follows. Produces ATP from ADP in the presence of a proton gradient across the membrane. This Thermus thermophilus (strain ATCC 27634 / DSM 579 / HB8) protein is V-type ATP synthase subunit C (atpC).